Consider the following 311-residue polypeptide: MKQQNDTQILQFLLLGLSENTELQPLIYWLFFSMYLVTVWGNLIIILATVLDFRLHTAMYFFLCNLSFVDICLISTTIPKMLANVHLNHKAITYEGCIMQIYFFTLFVGLDNFLLAVMAYDRFVAICHPLRYTSIMTPHLCMSLVLVSWIASVLNSSLQSFLVLQLSFCTEVEIPHFFCELSMLVHLACSDTFLSDMAMNVLAALLGGGCLVGILYSYSKIVSSIQAISSAEGKYKAFSTCVSHLSVVSLFYCTLLGVYLSSAVTQNSHSTAATSLMYTVVTPMLNPFIYSLRNDNIKRALKNFVKKKLEK.

At 1–25 the chain is on the extracellular side; the sequence is MKQQNDTQILQFLLLGLSENTELQP. N-linked (GlcNAc...) asparagine glycosylation is present at Asn5. Residues 26-46 form a helical membrane-spanning segment; the sequence is LIYWLFFSMYLVTVWGNLIII. Topologically, residues 47–57 are cytoplasmic; sequence LATVLDFRLHT. Residues 58 to 78 form a helical membrane-spanning segment; the sequence is AMYFFLCNLSFVDICLISTTI. Topologically, residues 79–97 are extracellular; sequence PKMLANVHLNHKAITYEGC. A disulfide bridge links Cys97 with Cys179. Residues 98–118 traverse the membrane as a helical segment; the sequence is IMQIYFFTLFVGLDNFLLAVM. The Cytoplasmic segment spans residues 119–133; the sequence is AYDRFVAICHPLRYT. Residues 134–154 traverse the membrane as a helical segment; that stretch reads SIMTPHLCMSLVLVSWIASVL. Residue Asn155 is glycosylated (N-linked (GlcNAc...) asparagine). At 155–196 the chain is on the extracellular side; the sequence is NSSLQSFLVLQLSFCTEVEIPHFFCELSMLVHLACSDTFLSD. The chain crosses the membrane as a helical span at residues 197-217; it reads MAMNVLAALLGGGCLVGILYS. The Cytoplasmic segment spans residues 218-244; that stretch reads YSKIVSSIQAISSAEGKYKAFSTCVSH. A helical transmembrane segment spans residues 245–265; sequence LSVVSLFYCTLLGVYLSSAVT. Over 266-271 the chain is Extracellular; it reads QNSHST. Residues 272 to 292 traverse the membrane as a helical segment; that stretch reads AATSLMYTVVTPMLNPFIYSL. At 293–311 the chain is on the cytoplasmic side; that stretch reads RNDNIKRALKNFVKKKLEK.

Belongs to the G-protein coupled receptor 1 family. As to expression, tongue specific.

The protein resides in the cell membrane. In terms of biological role, possible taste receptor. The polypeptide is Olfactory receptor 1073 (Olr1073) (Rattus norvegicus (Rat)).